Consider the following 598-residue polypeptide: Vanadium-dependent bromoperoxidase (598 aa).

5 residues coordinate Ca(2+): Phe-361, Gln-363, Asp-365, Asp-368, and Gln-370. Residues Lys-400 and Arg-408 each coordinate vanadate. The active site involves His-480. Residues Ser-485, Gly-486, His-487, Arg-547, and His-553 each contribute to the vanadate site. His-487 is an active-site residue.

The protein belongs to the vanadium-dependent haloperoxidase family. Homododecamer. Ca(2+) is required as a cofactor. It depends on vanadate as a cofactor.

The enzyme catalyses RH + Br(-) + H2O2 = RBr + 2 H2O.. Catalyzes the halogenation of organic substrates in the presence of hydrogen peroxide. This chain is Vanadium-dependent bromoperoxidase, found in Corallina pilulifera (Red coralline alga).